A 407-amino-acid polypeptide reads, in one-letter code: Peptidase T (407 aa).

Position 78 (histidine 78) interacts with Zn(2+). Residue aspartate 80 is part of the active site. Aspartate 139 provides a ligand contact to Zn(2+). The active-site Proton acceptor is the glutamate 173. Glutamate 174, aspartate 196, and histidine 378 together coordinate Zn(2+).

Belongs to the peptidase M20B family. Zn(2+) is required as a cofactor.

The protein resides in the cytoplasm. The enzyme catalyses Release of the N-terminal residue from a tripeptide.. Functionally, cleaves the N-terminal amino acid of tripeptides. The protein is Peptidase T of Macrococcus caseolyticus (strain JCSC5402) (Macrococcoides caseolyticum).